A 308-amino-acid polypeptide reads, in one-letter code: Glucan 1,3-beta-glucosidase (308 aa).

Residues methionine 1–alanine 18 form the signal peptide. The active-site Proton donor is glutamate 119. The N-linked (GlcNAc...) asparagine glycan is linked to asparagine 197. Catalysis depends on glutamate 228, which acts as the Nucleophile.

It belongs to the glycosyl hydrolase 17 family.

The protein resides in the secreted. Its subcellular location is the cell wall. The enzyme catalyses Successive hydrolysis of beta-D-glucose units from the non-reducing ends of (1-&gt;3)-beta-D-glucans, releasing alpha-glucose.. This is Glucan 1,3-beta-glucosidase (BGL2) from Candida albicans (Yeast).